The sequence spans 44 residues: Homeobox protein DLX-1 (44 aa).

The interval 19–44 (RALSAGSPPVPPGWNRIPPLGRAQEE) is disordered.

The protein belongs to the distal-less homeobox family. In terms of assembly, interacts with SMAD4 (via homeobox DNA-binding domain). Interacts (via homeobox DNA-binding domain) with POU4F2; this interaction suppresses DLX1-mediated transcriptional activity in postnatal retina and enhances retinal ganglion cell (RGC) differentiation.

Its subcellular location is the nucleus. In terms of biological role, plays a role as a transcriptional activator or repressor. Inhibits several cytokine signaling pathways, such as TGFB1, activin-A/INHBA and BMP4 by interfering with the transcriptional stimulatory activity of transcription factors, such as MSX2, FAST2, SMAD2 and SMAD3 during hematopoietic cell differentiation. Plays a role in terminal differentiation of interneurons, such as amacrine and bipolar cells in the developing retina. Likely to play a regulatory role in the development of the ventral forebrain. May play a role in craniofacial patterning and morphogenesis and may be involved in the early development of diencephalic subdivisions. The protein is Homeobox protein DLX-1 (Dlx1) of Rattus norvegicus (Rat).